The sequence spans 96 residues: uncharacterized protein (96 aa).

It is found in the mitochondrion. This is an uncharacterized protein from Saccharomyces cerevisiae (strain ATCC 204508 / S288c) (Baker's yeast).